We begin with the raw amino-acid sequence, 364 residues long: UDP-N-acetylglucosamine--N-acetylmuramyl-(pentapeptide) pyrophosphoryl-undecaprenol N-acetylglucosamine transferase (364 aa).

Residues 10 to 12 (TGG), asparagine 128, arginine 170, serine 199, isoleucine 250, and glutamine 295 contribute to the UDP-N-acetyl-alpha-D-glucosamine site.

The protein belongs to the glycosyltransferase 28 family. MurG subfamily.

It is found in the cell inner membrane. The enzyme catalyses di-trans,octa-cis-undecaprenyl diphospho-N-acetyl-alpha-D-muramoyl-L-alanyl-D-glutamyl-meso-2,6-diaminopimeloyl-D-alanyl-D-alanine + UDP-N-acetyl-alpha-D-glucosamine = di-trans,octa-cis-undecaprenyl diphospho-[N-acetyl-alpha-D-glucosaminyl-(1-&gt;4)]-N-acetyl-alpha-D-muramoyl-L-alanyl-D-glutamyl-meso-2,6-diaminopimeloyl-D-alanyl-D-alanine + UDP + H(+). It functions in the pathway cell wall biogenesis; peptidoglycan biosynthesis. In terms of biological role, cell wall formation. Catalyzes the transfer of a GlcNAc subunit on undecaprenyl-pyrophosphoryl-MurNAc-pentapeptide (lipid intermediate I) to form undecaprenyl-pyrophosphoryl-MurNAc-(pentapeptide)GlcNAc (lipid intermediate II). This is UDP-N-acetylglucosamine--N-acetylmuramyl-(pentapeptide) pyrophosphoryl-undecaprenol N-acetylglucosamine transferase from Chlorobium phaeobacteroides (strain DSM 266 / SMG 266 / 2430).